A 272-amino-acid polypeptide reads, in one-letter code: Arylesterase (272 aa).

Positions 21–253 constitute an AB hydrolase-1 domain; the sequence is KPVLFSHGWL…LKVYKDAPHG (233 aa). Trp-29 is a binding site for acetate. Ser-95 is a catalytic residue. Residue Met-96 participates in acetate binding. Residues Asp-223 and His-252 contribute to the active site.

Belongs to the AB hydrolase superfamily. Bacterial non-heme haloperoxidase / perhydrolase family. As to quaternary structure, dimer of trimers.

The enzyme catalyses a phenyl acetate + H2O = a phenol + acetate + H(+). It catalyses the reaction peracetic acid + H2O = acetate + H2O2 + H(+). It carries out the reaction a percarboxylic acid + H2O = a carboxylate + H2O2 + H(+). In terms of biological role, hydrolyzes phenolic esters, such as phenyl acetate, nitrophenyl acetate and naphtyl acetate. Can act on a wide range of esters, but reaction rate and enantioselectivity differ significantly depending on the substrate. Shows a preference for esters with small acyl groups. Also shows low perhydrolase activity, and catalyzes the reversible formation of peroxycarboxylic acids from carboxylic acids and hydrogen peroxide. In vitro, enzyme-generated peracetic acid oxidizes bromide ion to bromonium, which reacts with monochlorodimedone to form bromochlorodimedone. The polypeptide is Arylesterase (Pseudomonas fluorescens).